We begin with the raw amino-acid sequence, 181 residues long: Large ribosomal subunit protein eL18 (181 aa).

Residues 152–181 (WGKAPGQRGSHSAPYVRSEGRKFERAHGLK) are disordered. A compositionally biased stretch (basic and acidic residues) spans 169-181 (SEGRKFERAHGLK).

It belongs to the eukaryotic ribosomal protein eL18 family.

Its subcellular location is the cytoplasm. The protein is Large ribosomal subunit protein eL18 (RPL18) of Tetrahymena thermophila.